Here is a 444-residue protein sequence, read N- to C-terminus: Methylenetetrahydrofolate--tRNA-(uracil-5-)-methyltransferase TrmFO (444 aa).

9–14 is an FAD binding site; that stretch reads GAGMAG.

This sequence belongs to the MnmG family. TrmFO subfamily. The cofactor is FAD.

The protein resides in the cytoplasm. The enzyme catalyses uridine(54) in tRNA + (6R)-5,10-methylene-5,6,7,8-tetrahydrofolate + NADH + H(+) = 5-methyluridine(54) in tRNA + (6S)-5,6,7,8-tetrahydrofolate + NAD(+). It carries out the reaction uridine(54) in tRNA + (6R)-5,10-methylene-5,6,7,8-tetrahydrofolate + NADPH + H(+) = 5-methyluridine(54) in tRNA + (6S)-5,6,7,8-tetrahydrofolate + NADP(+). Its function is as follows. Catalyzes the folate-dependent formation of 5-methyl-uridine at position 54 (M-5-U54) in all tRNAs. This Cereibacter sphaeroides (strain ATCC 17025 / ATH 2.4.3) (Rhodobacter sphaeroides) protein is Methylenetetrahydrofolate--tRNA-(uracil-5-)-methyltransferase TrmFO.